Consider the following 634-residue polypeptide: Probable potassium transport system protein Kup (634 aa).

12 helical membrane-spanning segments follow: residues 21–41 (LVIGAIGVVFGDIGTSPLYTL), 58–78 (VLGILSLVFWALMLVVTLKYV), 110–130 (MYVVGILGIFGASLFFGDGVI), 147–167 (APKLEPFVVPITLVVLSMLFL), 179–199 (AFGPITLLWFFALGAIGVYNM), 223–243 (WHAVFVLGAVVLAVTGGEALY), 258–278 (WQFVVLPMLTLTYLGQGALVL), 296–316 (ALYPMIVLATAATVIASQALI), 348–368 (IYVPAVNWCLLALVAVAVIGF), 377–397 (AYGVSVTGTMLITTVLMIIYA), 403–423 (VPAPLLWLFALVFLAVDCAFF), and 427–447 (IIKFLDGAWFPLLLGLILFTL).

Belongs to the HAK/KUP transporter (TC 2.A.72) family.

It localises to the cell inner membrane. It catalyses the reaction K(+)(in) + H(+)(in) = K(+)(out) + H(+)(out). Transport of potassium into the cell. Likely operates as a K(+):H(+) symporter. The chain is Probable potassium transport system protein Kup from Xanthomonas axonopodis pv. citri (strain 306).